Here is a 123-residue protein sequence, read N- to C-terminus: Large ribosomal subunit protein uL22c (123 aa).

Belongs to the universal ribosomal protein uL22 family. As to quaternary structure, part of the 50S ribosomal subunit.

It is found in the plastid. It localises to the chloroplast. Its function is as follows. This protein binds specifically to 23S rRNA. In terms of biological role, the globular domain of the protein is located near the polypeptide exit tunnel on the outside of the subunit, while an extended beta-hairpin is found that lines the wall of the exit tunnel in the center of the 70S ribosome. The protein is Large ribosomal subunit protein uL22c (rpl22) of Chara vulgaris (Common stonewort).